A 443-amino-acid polypeptide reads, in one-letter code: MSTTPATPKVGFVSLGCPKALVDSERILTQLRMEGYEVVPTYEDADVVVVNTCGFIDSAKAESLEVIGEAIKENGKVIVTGCMGVEEGSIRDVHPSVLSVTGPQQYEQVVNAVHEVVPPRQDHNPLIDLVPPQGVKLTPRHYAYLKISEGCNHSCSFCIIPSMRGKLVSRPVGEVLSEAERLVKAGVKEILVISQDTSAYGVDVKYKTDFWNGRPVKTRMLELCEALSSLGAWVRLHYVYPYPNVDDVIPLMAAGKILPYLDIPFQHASPKVLKSMKRPAFEDRTLARIKNWREQCPELVIRSTFIVGFPGETEEDFQYLLDWLTEAQLDRVGCFQYSPVEGAPANDLGLDEVPDDVKQERWDRFMAHQQAISAARLQQRIGKEIEVLIDEVEEQGSVGRSFFDAPEIDGSVFIDGDHGFKPGDKVRCRIVDADEYDMWAEPI.

The region spanning 8-118 (PKVGFVSLGC…VVNAVHEVVP (111 aa)) is the MTTase N-terminal domain. [4Fe-4S] cluster is bound by residues Cys-17, Cys-53, Cys-82, Cys-151, Cys-155, and Cys-158. In terms of domain architecture, Radical SAM core spans 137–375 (LTPRHYAYLK…MAHQQAISAA (239 aa)). Residues 378-443 (QQRIGKEIEV…DEYDMWAEPI (66 aa)) form the TRAM domain.

This sequence belongs to the methylthiotransferase family. RimO subfamily. [4Fe-4S] cluster is required as a cofactor.

It localises to the cytoplasm. It carries out the reaction L-aspartate(89)-[ribosomal protein uS12]-hydrogen + (sulfur carrier)-SH + AH2 + 2 S-adenosyl-L-methionine = 3-methylsulfanyl-L-aspartate(89)-[ribosomal protein uS12]-hydrogen + (sulfur carrier)-H + 5'-deoxyadenosine + L-methionine + A + S-adenosyl-L-homocysteine + 2 H(+). In terms of biological role, catalyzes the methylthiolation of an aspartic acid residue of ribosomal protein uS12. This is Ribosomal protein uS12 methylthiotransferase RimO from Pseudomonas entomophila (strain L48).